A 160-amino-acid polypeptide reads, in one-letter code: Large ribosomal subunit protein uL22c (160 aa).

This sequence belongs to the universal ribosomal protein uL22 family. As to quaternary structure, part of the 50S ribosomal subunit.

The protein resides in the plastid. It localises to the chloroplast. Functionally, this protein binds specifically to 23S rRNA. Its function is as follows. The globular domain of the protein is located near the polypeptide exit tunnel on the outside of the subunit, while an extended beta-hairpin is found that lines the wall of the exit tunnel in the center of the 70S ribosome. This chain is Large ribosomal subunit protein uL22c (rpl22), found in Olimarabidopsis pumila (Dwarf rocket).